The chain runs to 487 residues: Betaine aldehyde dehydrogenase (487 aa).

K(+) contacts are provided by Ser26 and Asp93. Residue Gly150–Trp152 participates in NAD(+) binding. Residue Lys162 is the Charge relay system of the active site. Residues Lys176 to Glu179 and Ser229 to Thr232 contribute to the NAD(+) site. Residue Leu244 participates in K(+) binding. Catalysis depends on Glu250, which acts as the Proton acceptor. The NAD(+) site is built by Gly252, Cys284, and Glu384. Cys284 acts as the Nucleophile in catalysis. A Cysteine sulfenic acid (-SOH) modification is found at Cys284. K(+) is bound by residues Lys454 and Gly457. The active-site Charge relay system is Glu461.

This sequence belongs to the aldehyde dehydrogenase family. In terms of assembly, dimer of dimers. It depends on K(+) as a cofactor.

It carries out the reaction betaine aldehyde + NAD(+) + H2O = glycine betaine + NADH + 2 H(+). The protein operates within amine and polyamine biosynthesis; betaine biosynthesis via choline pathway; betaine from betaine aldehyde: step 1/1. Its function is as follows. Involved in the biosynthesis of the osmoprotectant glycine betaine. Catalyzes the irreversible oxidation of betaine aldehyde to the corresponding acid. This is Betaine aldehyde dehydrogenase from Rhizobium johnstonii (strain DSM 114642 / LMG 32736 / 3841) (Rhizobium leguminosarum bv. viciae).